The primary structure comprises 79 residues: Protein NOI4 (79 aa).

The disordered stretch occupies residues 31-68; that stretch reads KARDEKKTGGKPGSPGKSSEGHVKSGGGDPSKPQPKKW. At serine 44 the chain carries Phosphoserine.

The protein belongs to the RIN4 family. Post-translationally, proteolytic cleaved by P.syringae pv tomato AvrRpt2 after Gly-12; this cleavage is critical for subsequent proteasome-dependent elimination.

This Arabidopsis thaliana (Mouse-ear cress) protein is Protein NOI4.